The primary structure comprises 390 residues: MVQLTIDNARGVTLCRVSLPANATVQQLLLQLTVAKPELRQAQAIRNDVRHVTHRLTPASTTTTTTTSVVSSNAQTLLQAGLVGQGATAETLVVLMAADAPAAASSAAAAAPSPTKAVAAQILDLFGCASASPSAGVRSQASVVPSTMDERQLELQRRIYAQIQQQQIDENLANALEYTPEAFAKVTMLYVPCTINQVLVKAFVDSGAQNSIMNKRTAERCGLMRLVDVRMRDVAVGVGRQEICGRIHMTPVNLAGMYIPFAFYVIEDQAMDLIIGLDQLKRHQMMIDLKHNCLTIDNINVPFLPENDLPALAALGDDENAMHAPRHQDPATTATTASNPAAPVLSEGERQARIEGFMTVSGITDPTQAAELLEAADWNPNVAAALLFDT.

Asp-205 is a catalytic residue. The tract at residues 322 to 344 (MHAPRHQDPATTATTASNPAAPV) is disordered. Residues 330–343 (PATTATTASNPAAP) are compositionally biased toward low complexity.

This sequence belongs to the DDI1 family.

The protein localises to the cytoplasm. Its activity is regulated as follows. Inhibited by pepstatin, diazoacetyl-DL-norleucine methyl ester (DAN) and nelfinavir. Inhibited by the proteinase inhibitors lopinavir and ritonavir. In terms of biological role, aspartic protease. This is Protein DDI1 homolog from Leishmania major.